Here is a 20-residue protein sequence, read N- to C-terminus: Maximin-Ht (20 aa).

This sequence belongs to the bombinin family. As to expression, expressed by the skin glands.

Its subcellular location is the secreted. Its function is as follows. Has antimicrobial activity. The protein is Maximin-Ht of Bombina maxima (Giant fire-bellied toad).